The sequence spans 243 residues: 1-(5-phosphoribosyl)-5-[(5-phosphoribosylamino)methylideneamino] imidazole-4-carboxamide isomerase (243 aa).

The active-site Proton acceptor is Asp8. Asp129 acts as the Proton donor in catalysis.

This sequence belongs to the HisA/HisF family.

The protein localises to the cytoplasm. It carries out the reaction 1-(5-phospho-beta-D-ribosyl)-5-[(5-phospho-beta-D-ribosylamino)methylideneamino]imidazole-4-carboxamide = 5-[(5-phospho-1-deoxy-D-ribulos-1-ylimino)methylamino]-1-(5-phospho-beta-D-ribosyl)imidazole-4-carboxamide. It functions in the pathway amino-acid biosynthesis; L-histidine biosynthesis; L-histidine from 5-phospho-alpha-D-ribose 1-diphosphate: step 4/9. This Brucella suis biovar 1 (strain 1330) protein is 1-(5-phosphoribosyl)-5-[(5-phosphoribosylamino)methylideneamino] imidazole-4-carboxamide isomerase.